The primary structure comprises 333 residues: Probable 4-hydroxyproline 2-epimerase (333 aa).

Cys90 functions as the Proton acceptor in the catalytic mechanism. Substrate contacts are provided by residues 91 to 92 (GH), His223, and Asp249. Residue Cys253 is the Proton donor of the active site. 254-255 (GT) provides a ligand contact to substrate.

It belongs to the proline racemase family.

It carries out the reaction trans-4-hydroxy-L-proline = cis-4-hydroxy-D-proline. Functionally, likely catalyzes the epimerization of trans-4-hydroxy-L-proline (t4LHyp) to cis-4-hydroxy-D-proline (c4DHyp). May be involved in the degradation pathway that converts t4LHyp to alpha-ketoglutarate, which would allow R.meliloti to grow on t4LHyp as a sole carbon source. The sequence is that of Probable 4-hydroxyproline 2-epimerase from Rhizobium meliloti (strain 1021) (Ensifer meliloti).